Reading from the N-terminus, the 205-residue chain is Arginine exporter protein ArgO (205 aa).

6 helical membrane passes run 1-21 (MLAVYLHGFILSAAMILPLGP), 42-62 (LCALSDIILICAGIFGGSALL), 67-87 (LLLALVTWGGVAFLMWYGWGA), 111-131 (ILVTLLAVTWLNPHVYLDTFV), 147-167 (WFALGAVTASIVWFFALALLA), and 185-205 (LFVGGVMGFIAFQLARQGFGL).

It belongs to the LysE/ArgO transporter (TC 2.A.75) family.

It localises to the cell inner membrane. The enzyme catalyses L-arginine(in) = L-arginine(out). Functionally, involved in the export of arginine. Important to control the intracellular level of arginine and the correct balance between arginine and lysine. This is Arginine exporter protein ArgO from Yersinia pseudotuberculosis serotype IB (strain PB1/+).